The following is a 1237-amino-acid chain: uncharacterized protein (1237 aa).

One can recognise an MHD1 domain in the interval Lys591 to Thr712. Positions Leu786 to Phe906 constitute a C2 domain. In terms of domain architecture, MHD2 spans Glu1014–Cys1130.

This is an uncharacterized protein from Schizosaccharomyces pombe (strain 972 / ATCC 24843) (Fission yeast).